The sequence spans 188 residues: Elongation factor P (188 aa).

The protein belongs to the elongation factor P family.

It is found in the cytoplasm. It functions in the pathway protein biosynthesis; polypeptide chain elongation. Functionally, involved in peptide bond synthesis. Stimulates efficient translation and peptide-bond synthesis on native or reconstituted 70S ribosomes in vitro. Probably functions indirectly by altering the affinity of the ribosome for aminoacyl-tRNA, thus increasing their reactivity as acceptors for peptidyl transferase. The protein is Elongation factor P of Rickettsia peacockii (strain Rustic).